The sequence spans 475 residues: DNA-binding protein D-ETS-6 (475 aa).

Positions serine 42–proline 150 are disordered. The span at serine 70 to proline 108 shows a compositional bias: low complexity. Positions valine 109 to valine 121 are enriched in pro residues. A compositionally biased stretch (low complexity) spans serine 122–valine 144. The PNT domain maps to arginine 132 to alanine 219. The ETS DNA-binding region spans isoleucine 255–aspartate 335. The interval glycine 350–asparagine 475 is disordered. Residues proline 375–histidine 388 show a composition bias toward basic residues. Positions serine 401–serine 436 are enriched in low complexity. Positions arginine 453–asparagine 475 are enriched in polar residues.

This sequence belongs to the ETS family. Embryonic ventral nervous system and 1 pair of neurons in each thoracic segment.

Its subcellular location is the nucleus. The chain is DNA-binding protein D-ETS-6 (Ets21C) from Drosophila melanogaster (Fruit fly).